The chain runs to 227 residues: dTTP/UTP pyrophosphatase (227 aa).

Residue Asp98 is the Proton acceptor of the active site.

It belongs to the Maf family. YhdE subfamily. Requires a divalent metal cation as cofactor.

The protein resides in the cytoplasm. The enzyme catalyses dTTP + H2O = dTMP + diphosphate + H(+). The catalysed reaction is UTP + H2O = UMP + diphosphate + H(+). Its function is as follows. Nucleoside triphosphate pyrophosphatase that hydrolyzes dTTP and UTP. May have a dual role in cell division arrest and in preventing the incorporation of modified nucleotides into cellular nucleic acids. The polypeptide is dTTP/UTP pyrophosphatase (Bartonella quintana (strain Toulouse) (Rochalimaea quintana)).